We begin with the raw amino-acid sequence, 756 residues long: Sodium/hydrogen exchanger 8 (756 aa).

The Extracellular portion of the chain corresponds to 1 to 31 (MTSIIGAALPYKSPEKAIASSSYSAENDSSP). N-linked (GlcNAc...) asparagine glycosylation occurs at N27. Residues 32 to 52 (VDAVIFAGTSLVLGTACRYLF) traverse the membrane as a helical segment. The Cytoplasmic segment spans residues 53–56 (NGTR). Residues 57–77 (VPYTVVLLVIGIFLGSLEYGT) traverse the membrane as a helical segment. Residues 78–89 (KHNLGKLGHGIR) lie on the Extracellular side of the membrane. A helical transmembrane segment spans residues 90-110 (IWNGINPDLLLAVFLPVLLFE). The Cytoplasmic segment spans residues 111–125 (SSFSMDVHQIKRCMG). A helical membrane pass occupies residues 126 to 146 (QMVLLAGPGVLISTFCLGALI). Residues 147–157 (KLTFPYNWDWK) are Extracellular-facing. Residues 158–178 (TSLLLGGLLGATDPVAVVALL) traverse the membrane as a helical segment. The Cytoplasmic segment spans residues 179-194 (KELGASKKMTTLIDGE). The chain crosses the membrane as a helical span at residues 195–215 (SLMNDGVSVVVFQLFFKMVMG). Over 216-225 (HNSDWGSIIK) the chain is Extracellular. Residues 226 to 248 (FLVQNSFGAVGIGLAFGIASVFW) traverse the membrane as a helical segment. At 249–251 (LKF) the chain is on the cytoplasmic side. The helical transmembrane segment at 252-271 (IFNDTVAQITVTLSASYFAY) threads the bilayer. Over 272-276 (YTAQE) the chain is Extracellular. The helical transmembrane segment at 277–297 (WAGVSGILTVMILGMFFAAFA) threads the bilayer. At 298–311 (RTAFKGDSHQSLHH) the chain is on the cytoplasmic side. The chain crosses the membrane as a helical span at residues 312–332 (FWEMAAYIANTLVFMLSGVII). Over 333–350 (AESVLSGQTISYKGNSWS) the chain is Extracellular. The helical transmembrane segment at 351–371 (FLFLLYLYVQLSRCVVVGVLY) threads the bilayer. The Cytoplasmic portion of the chain corresponds to 372–385 (PLLCRSGYGLDWKE). The chain crosses the membrane as a helical span at residues 386-406 (SIILTWSGLRGAVSLSLALSV). Topologically, residues 407–422 (KQSSGNSYLSSDTGTR) are extracellular. A helical transmembrane segment spans residues 423–443 (FLFLTGGIVFLTLVVNGSTTQ). Residues 444–756 (LLLHLLRMDT…RSLAIGETDA (313 aa)) lie on the Cytoplasmic side of the membrane.

Belongs to the monovalent cation:proton antiporter 1 (CPA1) transporter (TC 2.A.36) family.

The protein localises to the cell membrane. The enzyme catalyses Na(+)(in) + H(+)(out) = Na(+)(out) + H(+)(in). The catalysed reaction is K(+)(in) + H(+)(out) = K(+)(out) + H(+)(in). May act in low affinity electroneutral exchange of protons for cations such as Na(+) or K(+) across membranes. May also exchange Li(+) and Cs(+) with a lower affinity. The chain is Sodium/hydrogen exchanger 8 (NHX8) from Arabidopsis thaliana (Mouse-ear cress).